A 232-amino-acid polypeptide reads, in one-letter code: Phosphatidylserine decarboxylase proenzyme (232 aa).

Residue Ser190 is the Schiff-base intermediate with substrate; via pyruvic acid of the active site. Ser190 carries the post-translational modification Pyruvic acid (Ser); by autocatalysis.

This sequence belongs to the phosphatidylserine decarboxylase family. PSD-A subfamily. Heterodimer of a large membrane-associated beta subunit and a small pyruvoyl-containing alpha subunit. It depends on pyruvate as a cofactor. In terms of processing, is synthesized initially as an inactive proenzyme. Formation of the active enzyme involves a self-maturation process in which the active site pyruvoyl group is generated from an internal serine residue via an autocatalytic post-translational modification. Two non-identical subunits are generated from the proenzyme in this reaction, and the pyruvate is formed at the N-terminus of the alpha chain, which is derived from the carboxyl end of the proenzyme. The post-translation cleavage follows an unusual pathway, termed non-hydrolytic serinolysis, in which the side chain hydroxyl group of the serine supplies its oxygen atom to form the C-terminus of the beta chain, while the remainder of the serine residue undergoes an oxidative deamination to produce ammonia and the pyruvoyl prosthetic group on the alpha chain.

It localises to the cell membrane. The catalysed reaction is a 1,2-diacyl-sn-glycero-3-phospho-L-serine + H(+) = a 1,2-diacyl-sn-glycero-3-phosphoethanolamine + CO2. The protein operates within phospholipid metabolism; phosphatidylethanolamine biosynthesis; phosphatidylethanolamine from CDP-diacylglycerol: step 2/2. Its function is as follows. Catalyzes the formation of phosphatidylethanolamine (PtdEtn) from phosphatidylserine (PtdSer). In Bradyrhizobium sp. (strain ORS 278), this protein is Phosphatidylserine decarboxylase proenzyme.